The primary structure comprises 540 residues: Medium/long-chain-fatty-acid--[acyl-carrier-protein] ligase FadD10 (540 aa).

Residue threonine 177 coordinates Mg(2+). ATP contacts are provided by isoleucine 226, valine 316, and serine 320. Glutamate 321 lines the Mg(2+) pocket. Aspartate 408 contributes to the ATP binding site.

It belongs to the ATP-dependent AMP-binding enzyme family. In terms of assembly, homodimer. Requires Mg(2+) as cofactor.

It localises to the cytoplasm. It catalyses the reaction a medium-chain fatty acid + holo-[ACP] + ATP = a medium-chain fatty acyl-[ACP] + AMP + diphosphate. The enzyme catalyses a medium-chain fatty acid + ATP + H(+) = a medium-chain fatty acyl-AMP + diphosphate. The catalysed reaction is a medium-chain fatty acyl-AMP + holo-[ACP] = a medium-chain fatty acyl-[ACP] + AMP + H(+). It carries out the reaction a long-chain fatty acid + holo-[ACP] + ATP = a long-chain fatty acyl-[ACP] + AMP + diphosphate. It catalyses the reaction a long-chain fatty acid + ATP + H(+) = a long-chain fatty acyl-AMP + diphosphate. The enzyme catalyses a long-chain fatty acyl-AMP + holo-[ACP] = a long-chain fatty acyl-[ACP] + AMP + H(+). The catalysed reaction is a (2E)-enoyl fatty acid + holo-[ACP] + ATP = a (2E)-enoyl-[ACP] + AMP + diphosphate. It carries out the reaction a (2E)-enoyl fatty acid + ATP + H(+) = a (2E)-2-fatty-enoyl-AMP + diphosphate. It catalyses the reaction a (2E)-2-fatty-enoyl-AMP + holo-[ACP] = a (2E)-enoyl-[ACP] + AMP + H(+). The enzyme catalyses a (3R)-3-isocyanyl-fatty acid + holo-[ACP] + ATP = a (3R)-3-isocyanyl-fatty acyl-[ACP] + AMP + diphosphate. The catalysed reaction is a (3R)-3-isocyanyl-fatty acid + ATP + H(+) = a (3R)-3-isocyanyl-fatty acyl-AMP + diphosphate. It carries out the reaction a (3R)-3-isocyanyl-fatty acyl-AMP + holo-[ACP] = a (3R)-3-isocyanyl-fatty acyl-[ACP] + AMP + H(+). The protein operates within lipid metabolism; fatty acid metabolism. Functionally, acyl:acyl-carrier protein ligase involved in the biosynthesis of a unique class of isonitrile lipopeptides (INLPs) that seem to function as virulence factors in M.tuberculosis and to play a role in metal acquisition. Catalyzes the activation of medium/long-chain fatty acids as acyl-adenylates (acyl-AMP), which are then transferred to the phosphopantetheine arm of the acyl-carrier protein (ACP) MT0109. Acts twice during the INLP pathway, catalyzing the activation of a (2E)-enoyl fatty acid as well as the corresponding (3R)-3-isocyanyl-fatty acid as acyl-adenylates (acyl-AMP), and then the acyl transfer to the dedicated acyl-carrier protein MT0109. This Mycobacterium tuberculosis (strain CDC 1551 / Oshkosh) protein is Medium/long-chain-fatty-acid--[acyl-carrier-protein] ligase FadD10 (fadD10).